The following is a 756-amino-acid chain: Tubulin glycylase 3B (756 aa).

Positions 104 to 123 (TPLPRTVTSSPTAPEAQKRQ) are disordered. Positions 272–629 (LEERMAFIED…DLPKNPTAAT (358 aa)) constitute a TTL domain. ATP is bound by residues 440–443 (QKYI), Lys-453, and Asp-455. The tract at residues 709–736 (ITKKKKLSASAGSSTAASAQPSTQNLTT) is disordered. Residues 716 to 727 (SASAGSSTAASA) are compositionally biased toward low complexity.

The protein localises to the cytoplasm. The protein resides in the cytoskeleton. It localises to the nucleus. Its function is as follows. Essential glycylase which modifies both tubulin and non-tubulin proteins, generating side chains of glycine on the gamma-carboxyl groups of specific glutamate residues of target proteins. Monoglycylates alpha-tubulin by adding a single glycine chain to generate monoglycine side chains, but is not involved in elongation step to generate polyglycine side chains on alpha-tubulin. Has the ability to both mono- and polyglycylate non-tubulin proteins such as up (Troponin T). Required for early steps of spermatogenesis. The sequence is that of Tubulin glycylase 3B (TTLL3B) from Drosophila melanogaster (Fruit fly).